The primary structure comprises 58 residues: Protein YecU (58 aa).

The sequence is that of Protein YecU from Escherichia coli (strain K12).